Consider the following 640-residue polypeptide: MGTRSSPEEGTPPPLVPECDVEVQPQGHPEESREQEASEVLAEPSSRGGAEQQAEEEEVGEGSSTESSRDAPEATPPIAMAATPPASTSSREGVRGAARRLQGQQLEALTRVALMEQRVKELQRQRKELRIEMEVEVALLRGELAGERVAARREEEQLRELLEQQAASEQRGRQQREQEQRRLSQERDRLEGLRQRLRKAQGQLDSQPEDQRERLLQGVQEMREQLDVAQRAYEDLEFQQLERESRQEEEDRDSPGPQVPDPKVQELQASMAQHRRGALQHRIRVLEEQLKSLGEQMAAESRGLSRKKEEALQALSQERSRLLELNCLQGTPGGDFSEPNPALTKLLFTQKTDRQLLVLQDAVAHSAATPTSSCLFSVHSSLQGSIGLQRTGSLPRKRGERGSQRGSPRPLSFHCTESLEASALPPAVGDSGRYPLYQLLNCGRGNSCGAIHPDIAHMERLLQQAMAERERLLKAREGTRRGTEGSSGPAVPAITAPPTPPHPPGPRILDLRQHLEGWGHNPENCPHVQVSGCCCRGPLVKMGGRIKTWRKRWFCFDRQARRLAYYADKEETKLKGVIYFQAIEEVYYDHLRCAFKSPNPRLTFCVKTYERLFYMVAPSPEAMRIWMDVIVTAADENHAP.

5 disordered regions span residues 1–100 (MGTR…AARR), 162–189 (LEQQAASEQRGRQQREQEQRRLSQERDR), 241–262 (LERESRQEEEDRDSPGPQVPDP), 387–412 (GLQRTGSLPRKRGERGSQRGSPRPLS), and 476–504 (REGTRRGTEGSSGPAVPAITAPPTPPHPP). Low complexity predominate over residues 76-90 (PPIAMAATPPASTSS). The stretch at 104 to 327 (QQLEALTRVA…ERSRLLELNC (224 aa)) forms a coiled coil. Residues 170-189 (QRGRQQREQEQRRLSQERDR) are compositionally biased toward basic and acidic residues. A coiled-coil region spans residues 454–481 (DIAHMERLLQQAMAERERLLKAREGTRR). Positions 495-504 (TAPPTPPHPP) are enriched in pro residues. In terms of domain architecture, PH spans 532-635 (GCCCRGPLVK…WMDVIVTAAD (104 aa)).

The protein is Pleckstrin homology-like domain family B member 3 (PHLDB3) of Homo sapiens (Human).